Reading from the N-terminus, the 84-residue chain is Apovitellenin-1 (84 aa).

The protein belongs to the apovitellenin family. Monomer.

Functionally, protein component of the very low density lipoprotein (VLDL) of egg-laying females. Potent lipoprotein lipase inhibitor, preventing the loss of triglycerides from VLDL on their way from the liver to the growing oocytes. The chain is Apovitellenin-1 from Dromaius novaehollandiae (Emu).